The primary structure comprises 107 residues: Lipid-anchored protein YDL012C (107 aa).

The segment covering 1 to 18 (MSAQDYYGNSASKQSYSR) has biased composition (polar residues). Residues 1-86 (MSAQDYYGNS…VQQQPASSGN (86 aa)) form a disordered region. An N-acetylserine modification is found at Ser-2. Residue Lys-13 forms a Glycyl lysine isopeptide (Lys-Gly) (interchain with G-Cter in ubiquitin) linkage. The span at 35 to 81 (PSQSQQNYYPPQQQQQQYQQQPQYYQQQQPQYYQQHPQQPIYVQQQP) shows a compositional bias: low complexity.

This sequence belongs to the CYSTM1 family.

It is found in the cell membrane. The polypeptide is Lipid-anchored protein YDL012C (Saccharomyces cerevisiae (strain ATCC 204508 / S288c) (Baker's yeast)).